We begin with the raw amino-acid sequence, 223 residues long: Ribonuclease HII (223 aa).

Positions 32 to 223 constitute an RNase H type-2 domain; it reads FHIAGVDEVG…LKGRFRDNMS (192 aa). Residues Asp-38, Glu-39, and Asp-130 each coordinate a divalent metal cation.

Belongs to the RNase HII family. Mn(2+) serves as cofactor. The cofactor is Mg(2+).

The protein localises to the cytoplasm. The enzyme catalyses Endonucleolytic cleavage to 5'-phosphomonoester.. In terms of biological role, endonuclease that specifically degrades the RNA of RNA-DNA hybrids. The chain is Ribonuclease HII from Bartonella quintana (strain Toulouse) (Rochalimaea quintana).